The primary structure comprises 293 residues: Small ribosomal subunit protein uS2 (293 aa).

Residues 239–293 (PAGGADWEAAPAGFPAAATGEWSEAQPATWESGAAAATGPSTEWADSAPKDTAGW) are disordered. Positions 247-256 (AAPAGFPAAA) are enriched in low complexity.

This sequence belongs to the universal ribosomal protein uS2 family. Component of the small ribosomal subunit. Mature ribosomes consist of a small (40S) and a large (60S) subunit. The 40S subunit contains about 33 different proteins and 1 molecule of RNA (18S). The 60S subunit contains about 49 different proteins and 3 molecules of RNA (25S, 5.8S and 5S). Interacts with RPS21.

It localises to the cytoplasm. Required for the assembly and/or stability of the 40S ribosomal subunit. Required for the processing of the 20S rRNA-precursor to mature 18S rRNA in a late step of the maturation of 40S ribosomal subunits. The protein is Small ribosomal subunit protein uS2 of Chaetomium globosum (strain ATCC 6205 / CBS 148.51 / DSM 1962 / NBRC 6347 / NRRL 1970) (Soil fungus).